A 1013-amino-acid polypeptide reads, in one-letter code: Retinoblastoma-related protein 1 (1013 aa).

The domain A stretch occupies residues 406 to 607 (TPVSTAMTTA…EKGSSMYNSL (202 aa)). Positions 406-858 (TPVSTAMTTA…NEIFIPAVKP (453 aa)) are pocket. The tract at residues 608–727 (IVARPSLALE…PGGGGETCAE (120 aa)) is spacer. The interval 728 to 858 (TGINIFFTKI…NEIFIPAVKP (131 aa)) is domain B. Phosphoserine is present on residues S885 and S898. The interval 979-1013 (VANSLNLQNQNQNQNGSDASSSGGAAPLKTEPTDS) is disordered. The span at 980–1004 (ANSLNLQNQNQNQNGSDASSSGGAA) shows a compositional bias: low complexity.

This sequence belongs to the retinoblastoma protein (RB) family. As to quaternary structure, interacts with the begomovirus replication-associated protein (Rep), the nanovirus Clink protein, the mastrevirus RepA protein, E2FA, E2FB and E2FC. Interacts with MSI1 through its Domain A. Interacts with ATPK1/S6K1. Interacts with SCR. Interacts with HAT2. Interacts with FAMA. Interacts with MYB124 and MYB88. Component of a DREAM-like complex which modulates a variety of developmentally regulated genes and of the mitotic genes in proliferating and differentiated cells. Associates with MYB3R3 in both earlier and later stages of leaves development. Interacts with MYB3R4 only at early stages of leaves development. Highly phosphorylated by CDKA-1 during G1 to S phase transition. Once hyper-phosphorylated, becomes inactive and unable to interact with E2F. Post-translationally, ubiquitinated. Subject to proteasome-dependent degradation during sucrose starvation. In terms of tissue distribution, expressed in actively dividing cells. Detected in the shoot apical meristem, in young leaf primordia and in both sporophytic tissue and the megagametophyte.

It is found in the nucleus. In terms of biological role, key regulator of entry into cell division. Acts as a transcription repressor of E2F target genes, whose activity is required for progress from the G1 to the S phase of the cell cycle. Hyperphosphorylation by CDKA-1 prevents the binding to E2F transcription factors, allowing G1 to S phase transition to operate. Forms a stable complex with E2FA that functions in maintaining cell proliferation through repression of cell differentiation. Plays a central role in the mechanism controlling meristem cell differentiation, cell fate establishment and cell fate maintenance during organogenesis and gametogenesis. Required during lateral organ production. Also involved in controlling asymmetric divisions of stem cells in different stem cell niches. Acts as a negative regulator of cell proliferation during leaf and gametophytes development. At later stages of development, restricts the progression through additional endocycles. In the leaf, plays a role in the control of the mesophyll differentiation. Another role is its implication in the regulation of imprinted genes. Acts together with MSI1 to repress the expression of MET1 during gametogenesis. This in turn activates expression of the imprinted genes FIS2 and FWA. Regulates many genes of the polycomb repressive complex 2 (PRC2). Plays an important role in meiosis affecting different aspects of this complex process. Functions as a positive regulator of the developmental switch from embryonic heterotrophic growth to autotrophic growth. Interaction with mastrevirus RepA or nanovirus Clink protein disrupts the RBR/E2F interaction and releases the transcription of replicative enzymes needed by the virus by increasing the E2F DNA-binding activity. In Arabidopsis thaliana (Mouse-ear cress), this protein is Retinoblastoma-related protein 1 (RBR1).